The sequence spans 527 residues: Bifunctional purine biosynthesis protein PurH (527 aa).

Residues 1–144 form the MGS-like domain; that stretch reads MNRRALISVS…KNHESVAIIV (144 aa).

It belongs to the PurH family.

The catalysed reaction is (6R)-10-formyltetrahydrofolate + 5-amino-1-(5-phospho-beta-D-ribosyl)imidazole-4-carboxamide = 5-formamido-1-(5-phospho-D-ribosyl)imidazole-4-carboxamide + (6S)-5,6,7,8-tetrahydrofolate. It carries out the reaction IMP + H2O = 5-formamido-1-(5-phospho-D-ribosyl)imidazole-4-carboxamide. It functions in the pathway purine metabolism; IMP biosynthesis via de novo pathway; 5-formamido-1-(5-phospho-D-ribosyl)imidazole-4-carboxamide from 5-amino-1-(5-phospho-D-ribosyl)imidazole-4-carboxamide (10-formyl THF route): step 1/1. It participates in purine metabolism; IMP biosynthesis via de novo pathway; IMP from 5-formamido-1-(5-phospho-D-ribosyl)imidazole-4-carboxamide: step 1/1. The protein is Bifunctional purine biosynthesis protein PurH of Heliobacterium modesticaldum (strain ATCC 51547 / Ice1).